The primary structure comprises 377 residues: Presenilin-associated rhomboid-like protein, mitochondrial (377 aa).

The transit peptide at 1–50 (MALYSWVQRGWRCGQTWAPLLGGGYRELSATQARQLLGRRFNLLLQQKCG) directs the protein to the mitochondrion. Topologically, residues 51 to 95 (FRKAPRKVEPRRSDTGSSGEAYKRSALIPPLEETVFYPSPYPVRT) are mitochondrial matrix. 2 positions are modified to phosphoserine: serine 63 and serine 68. Residues 96–116 (LLKPFFFTVGFTGCAFGSAAI) form a helical membrane-spanning segment. The Mitochondrial intermembrane segment spans residues 117-165 (WQYESLKSRVQSYFDGIKADWLDSIRPQKEGNLRKEINKWWNSLSDGQR). The chain crosses the membrane as a helical span at residues 166–186 (TVTGIIAANALVFCLWRVPSL). Residues 187–214 (HRTMIRYFTSNPASKVLCSPMLLSTFSH) are Mitochondrial matrix-facing. The chain crosses the membrane as a helical span at residues 215–235 (FSLFHMAANMYVLWSFSTSIV). Residues 236 to 242 (NILGQEQ) are Mitochondrial intermembrane-facing. A helical membrane pass occupies residues 243-263 (FVAVYLSAGVISNFVSYVCKV). At 264 to 268 (ATGRY) the chain is on the mitochondrial matrix side. A helical membrane pass occupies residues 269 to 289 (GPSLGASGAIMTVLAAVCTKI). The Nucleophile role is filled by serine 275. Residues 290-293 (PEGR) lie on the Mitochondrial intermembrane side of the membrane. Residues 294–314 (LAIIFLPVFTFTAGNALKAII) form a helical membrane-spanning segment. At 315–331 (AMDTAGMILGWKFFDHA) the chain is on the mitochondrial matrix side. The helical transmembrane segment at 332 to 352 (AHLGGALFGIWYITYGHELIW) threads the bilayer. Histidine 333 is a catalytic residue. Residues 353-377 (KNREPLVKIWHEIRTNGPKKGGGSK) lie on the Mitochondrial intermembrane side of the membrane.

This sequence belongs to the peptidase S54 family. In terms of assembly, interacts with PSEN1 and PSEN2. Binds OPA1. Post-translationally, P-beta is proteolytically processed (beta-cleavage) in a PARL-dependent manner.

It localises to the mitochondrion inner membrane. It is found in the nucleus. The enzyme catalyses Cleaves type-1 transmembrane domains using a catalytic dyad composed of serine and histidine that are contributed by different transmembrane domains.. In terms of biological role, required for the control of apoptosis during postnatal growth. Essential for proteolytic processing of an antiapoptotic form of OPA1 which prevents the release of mitochondrial cytochrome c in response to intrinsic apoptotic signals. Required for the maturation of PINK1 into its 52kDa mature form after its cleavage by mitochondrial-processing peptidase (MPP). Promotes cleavage of serine/threonine-protein phosphatase PGAM5 in damaged mitochondria in response to loss of mitochondrial membrane potential. Mediates differential cleavage of PINK1 and PGAM5 depending on the health status of mitochondria, disassociating from PINK1 and associating with PGAM5 in response to mitochondrial membrane potential loss. Required for processing of CLPB into a form with higher protein disaggregase activity by removing an autoinhibitory N-terminal peptide. Promotes processing of DIABLO/SMAC in the mitochondrion which is required for DIABLO apoptotic activity. Also required for cleavage of STARD7 and TTC19. Promotes changes in mitochondria morphology regulated by phosphorylation of P-beta domain. The polypeptide is Presenilin-associated rhomboid-like protein, mitochondrial (Rattus norvegicus (Rat)).